Reading from the N-terminus, the 605-residue chain is YTH domain-containing protein ECT4 (605 aa).

Disordered stretches follow at residues 249 to 274 and 357 to 384; these read GVAS…SNSH and ELNR…QTFD. Residues 256–274 show a composition bias toward polar residues; it reads KANNNVPATRNQNSSSNSH. A compositionally biased stretch (basic and acidic residues) spans 368 to 383; sequence KATEEVSSEEVKKQTF. Positions 414-551 constitute a YTH domain; it reads AKFFIIKSYS…EQGLKVVKIF (138 aa). RNA contacts are provided by residues 420-422, Asp426, 436-437, Asn469, Trp493, Trp498, and Trp506; these read KSY and WA. A disordered region spans residues 580-605; it reads KQQQSQKQVWEGKTNDEKPGTVDSTM.

In terms of tissue distribution, expressed in the shoot apex, at the sites of leaf formation, and in emerging leaves.

The protein resides in the cytoplasm. Its function is as follows. Specifically recognizes and binds N6-methyladenosine (m6A)-containing RNAs, and regulates mRNA stability. M6A is a modification present at internal sites of mRNAs and some non-coding RNAs and plays a role in mRNA stability and processing. Required for the correct timing of leaf formation and normal leaf morphology. This chain is YTH domain-containing protein ECT4, found in Arabidopsis thaliana (Mouse-ear cress).